The sequence spans 396 residues: Probable sugar efflux transporter (396 aa).

At 1–14 the chain is on the cytoplasmic side; sequence MTTNTVSRKVAWLR. Residues 15–35 traverse the membrane as a helical segment; the sequence is VVTLAVAAFIFNTTEFVPVGL. Topologically, residues 36–49 are periplasmic; that stretch reads LSDIAQSFHMQTAQ. Residues 50–70 form a helical membrane-spanning segment; that stretch reads VGIMLTIYAWVVALMSLPFML. Residues 71-80 are Cytoplasmic-facing; the sequence is MTSQVERRKL. A helical transmembrane segment spans residues 81-101; the sequence is LICLFVVFIASHVLSFLSWSF. Thr-102 is a topological domain (periplasmic). The helical transmembrane segment at 103-123 threads the bilayer; sequence VLVISRIGVAFAHAIFWSITA. At 124 to 135 the chain is on the cytoplasmic side; that stretch reads SLAIRMAPAGKR. The chain crosses the membrane as a helical span at residues 136–156; sequence AQALSLIATGTALAMVLGLPL. Topologically, residues 157–169 are periplasmic; that stretch reads GRIVGQYFGWRMT. Residues 170 to 190 traverse the membrane as a helical segment; the sequence is FFAIGIGALVTLLCLIKLLPL. Residues 191–208 are Cytoplasmic-facing; it reads LPSEHSGSLKSLPLLFRR. Residues 209-229 traverse the membrane as a helical segment; the sequence is PALMSIYLLTVVVVTAHYTAY. Residues 230 to 245 are Periplasmic-facing; that stretch reads SYIEPFVQNIAGFSAN. A helical membrane pass occupies residues 246–266; sequence FATALLLLLGGAGIIGSVIFG. The Cytoplasmic portion of the chain corresponds to 267-274; that stretch reads KLGNQYAS. A helical membrane pass occupies residues 275–295; the sequence is ALVSTAIALLLVCLALLLPAA. Over 296–298 the chain is Periplasmic; the sequence is NSE. The helical transmembrane segment at 299–319 threads the bilayer; it reads IHLGVLSIFWGIAMMIIGLGM. At 320–332 the chain is on the cytoplasmic side; sequence QVKVLALAPDATD. The helical transmembrane segment at 333–353 threads the bilayer; sequence VAMALFSGIFNIGIGAGALVG. At 354–363 the chain is on the periplasmic side; that stretch reads NQVSLHWSMS. The helical transmembrane segment at 364 to 384 threads the bilayer; sequence MIGYVGAVPAFAALIWSIIIF. The Cytoplasmic segment spans residues 385–396; the sequence is RRWPVTLEEQTQ.

This sequence belongs to the major facilitator superfamily. SotB (TC 2.A.1.2) family.

It is found in the cell inner membrane. In terms of biological role, involved in the efflux of sugars. The physiological role may be the reduction of the intracellular concentration of toxic sugars or sugar metabolites. This Shigella flexneri protein is Probable sugar efflux transporter.